The following is a 367-amino-acid chain: UDP-N-acetylglucosamine--N-acetylmuramyl-(pentapeptide) pyrophosphoryl-undecaprenol N-acetylglucosamine transferase (367 aa).

Residues 22–24 (TGG), Asn134, Arg170, Ser198, Ile253, and Gln298 each bind UDP-N-acetyl-alpha-D-glucosamine.

Belongs to the glycosyltransferase 28 family. MurG subfamily.

It localises to the cell inner membrane. It catalyses the reaction di-trans,octa-cis-undecaprenyl diphospho-N-acetyl-alpha-D-muramoyl-L-alanyl-D-glutamyl-meso-2,6-diaminopimeloyl-D-alanyl-D-alanine + UDP-N-acetyl-alpha-D-glucosamine = di-trans,octa-cis-undecaprenyl diphospho-[N-acetyl-alpha-D-glucosaminyl-(1-&gt;4)]-N-acetyl-alpha-D-muramoyl-L-alanyl-D-glutamyl-meso-2,6-diaminopimeloyl-D-alanyl-D-alanine + UDP + H(+). It participates in cell wall biogenesis; peptidoglycan biosynthesis. Functionally, cell wall formation. Catalyzes the transfer of a GlcNAc subunit on undecaprenyl-pyrophosphoryl-MurNAc-pentapeptide (lipid intermediate I) to form undecaprenyl-pyrophosphoryl-MurNAc-(pentapeptide)GlcNAc (lipid intermediate II). The polypeptide is UDP-N-acetylglucosamine--N-acetylmuramyl-(pentapeptide) pyrophosphoryl-undecaprenol N-acetylglucosamine transferase (Xylella fastidiosa (strain M23)).